A 623-amino-acid polypeptide reads, in one-letter code: Scarecrow-like protein 22 (623 aa).

2 disordered regions span residues R62–A90 and P179–S203. Residues S63–G80 show a composition bias toward low complexity. The 388-residue stretch at N235 to K622 folds into the GRAS domain. Residues V242 to S311 are leucine repeat I (LRI). A VHIID region spans residues Y330 to A398. The VHIID signature appears at I361–D365. Residues F413–S448 are leucine repeat II (LRII). Residues I458–K545 form a PFYRE region. Residues T548 to K622 form an SAW region.

Belongs to the GRAS family. Expressed in seedlings, roots, leaves and flowers.

Its subcellular location is the nucleus. In terms of biological role, probable transcription factor involved in plant development. The chain is Scarecrow-like protein 22 (SCL22) from Arabidopsis thaliana (Mouse-ear cress).